We begin with the raw amino-acid sequence, 407 residues long: POC1 centriolar protein homolog A (407 aa).

WD repeat units lie at residues 17 to 56 (GHRD…RAYR), 59 to 98 (GHKD…ESTV), 101 to 140 (AHTA…FLFS), 143 to 182 (QHIN…CVHS), 185 to 224 (EHGG…LLQH), 227 to 266 (LHSA…LLYT), and 269 to 308 (GHQG…VDYG). Positions 317–357 (PATRASSSGTLPEVDPLVPPGRGRSQESMQSHSQEPVSVPQ) are disordered. Residues 342–357 (QESMQSHSQEPVSVPQ) show a composition bias toward polar residues. The stretch at 369–397 (QLDVLTQTVSILEQRLTLTEDKLKQCLEN) forms a coiled coil.

The protein belongs to the WD repeat POC1 family. In terms of assembly, interacts with POC1B.

It localises to the cytoplasm. Its subcellular location is the cytoskeleton. The protein localises to the microtubule organizing center. The protein resides in the centrosome. It is found in the centriole. It localises to the cilium basal body. Its subcellular location is the spindle pole. Functionally, plays an important role in centriole assembly and/or stability and ciliogenesis. Involved in early steps of centriole duplication, as well as in the later steps of centriole length control. Acts in concert with POC1B to ensure centriole integrity and proper mitotic spindle formation. The sequence is that of POC1 centriolar protein homolog A (POC1A) from Bos taurus (Bovine).